The primary structure comprises 255 residues: F-box/SPRY domain-containing protein 1 (255 aa).

Positions 3–51 (DPVAALCNYNVLEVIFSYLELEDLNHCSQVCKSWYHFLNDENSDVWRWH) constitute an F-box domain. One can recognise a B30.2/SPRY domain in the interval 61–253 (LKSDLLASVS…VSMVYLGTPL (193 aa)).

The protein belongs to the FBXO45/Fsn family. As to quaternary structure, component of an E3 ubiquitin ligase complex composed of hiw and Fsn.

Its subcellular location is the synapse. It participates in protein modification; protein ubiquitination. Required in the presynaptic motoneuron to down-regulate the levels of wnd and restrain synaptic terminal growth at the neuromuscular junction (NMJ). The protein is F-box/SPRY domain-containing protein 1 of Drosophila yakuba (Fruit fly).